A 23-amino-acid chain; its full sequence is Augerpeptide hhe7a (23 aa).

Disulfide bonds link Cys-3–Cys-11, Cys-6–Cys-19, and Cys-10–Cys-22.

As to expression, expressed by the venom duct.

The protein localises to the secreted. Functionally, causes abnormal twist followed by immobility when injected into C.elegans. The protein is Augerpeptide hhe7a of Hastula hectica (Sea snail).